The primary structure comprises 81 residues: ATP synthase subunit c (81 aa).

2 helical membrane-spanning segments follow: residues 6–26 and 57–77; these read ASASVIAAALAVGLAAIGPGI and LAFMESLTIYGLVISLVLLFA.

Belongs to the ATPase C chain family. F-type ATPases have 2 components, F(1) - the catalytic core - and F(0) - the membrane proton channel. F(1) has five subunits: alpha(3), beta(3), gamma(1), delta(1), epsilon(1). F(0) has four main subunits: a(1), b(1), b'(1) and c(10-14). The alpha and beta chains form an alternating ring which encloses part of the gamma chain. F(1) is attached to F(0) by a central stalk formed by the gamma and epsilon chains, while a peripheral stalk is formed by the delta, b and b' chains.

It localises to the cellular thylakoid membrane. Functionally, f(1)F(0) ATP synthase produces ATP from ADP in the presence of a proton or sodium gradient. F-type ATPases consist of two structural domains, F(1) containing the extramembraneous catalytic core and F(0) containing the membrane proton channel, linked together by a central stalk and a peripheral stalk. During catalysis, ATP synthesis in the catalytic domain of F(1) is coupled via a rotary mechanism of the central stalk subunits to proton translocation. In terms of biological role, key component of the F(0) channel; it plays a direct role in translocation across the membrane. A homomeric c-ring of between 10-14 subunits forms the central stalk rotor element with the F(1) delta and epsilon subunits. In Gloeothece citriformis (strain PCC 7424) (Cyanothece sp. (strain PCC 7424)), this protein is ATP synthase subunit c.